Here is a 378-residue protein sequence, read N- to C-terminus: Gibberellin 20 oxidase 2 (378 aa).

The span at methionine 1–proline 10 shows a compositional bias: polar residues. Residues methionine 1 to threonine 26 are disordered. Basic and acidic residues predominate over residues alanine 11–glutamine 25. The 101-residue stretch at glutamate 220–proline 320 folds into the Fe2OG dioxygenase domain. Fe cation contacts are provided by histidine 245, aspartate 247, and histidine 301. Residue arginine 311 is part of the active site.

This sequence belongs to the iron/ascorbate-dependent oxidoreductase family. GA20OX subfamily. It depends on Fe(2+) as a cofactor. The cofactor is L-ascorbate. As to expression, expressed in inflorescence and developing siliques. Detected in seeds, roots, cotyledons and leaves. In seeds, specifically detected at the rim of the embryo and the outer integument.

The catalysed reaction is gibberellin A12 + 2 2-oxoglutarate + 3 O2 + H(+) = gibberellin A9 + 2 succinate + 3 CO2 + 2 H2O. It carries out the reaction gibberellin A12 + 2-oxoglutarate + O2 = gibberellin A15 + succinate + CO2. The enzyme catalyses gibberellin A15 + 2-oxoglutarate + O2 = gibberellin A24 + succinate + CO2 + H2O. It catalyses the reaction gibberellin A53 + 2-oxoglutarate + O2 = gibberellin A44 + succinate + CO2. The catalysed reaction is gibberellin A12 + 3 2-oxoglutarate + 3 O2 = gibberellin A25 + 3 succinate + 3 CO2 + H2O + H(+). It participates in plant hormone biosynthesis; gibberellin biosynthesis. In terms of biological role, key oxidase enzyme in the biosynthesis of gibberellin that catalyzes the conversion of GA12 to GA9, via a three-step oxidation at C-20 of the GA skeleton, and GA25 is also formed as a minor product. GA53 is less effectively oxidized than GA12 and is only oxidized one step to GA44. Involved in the promotion of the floral transition, fertility and silique elongation, but plays only a minor role in elongation of seedling organs. Acts redundantly with GA20OX1. The protein is Gibberellin 20 oxidase 2 (GA20OX2) of Arabidopsis thaliana (Mouse-ear cress).